A 364-amino-acid polypeptide reads, in one-letter code: Aminomethyltransferase (364 aa).

It belongs to the GcvT family. The glycine cleavage system is composed of four proteins: P, T, L and H.

The catalysed reaction is N(6)-[(R)-S(8)-aminomethyldihydrolipoyl]-L-lysyl-[protein] + (6S)-5,6,7,8-tetrahydrofolate = N(6)-[(R)-dihydrolipoyl]-L-lysyl-[protein] + (6R)-5,10-methylene-5,6,7,8-tetrahydrofolate + NH4(+). Functionally, the glycine cleavage system catalyzes the degradation of glycine. This is Aminomethyltransferase from Citrobacter koseri (strain ATCC BAA-895 / CDC 4225-83 / SGSC4696).